A 249-amino-acid chain; its full sequence is Ribonuclease 3 (249 aa).

The 123-residue stretch at 29 to 151 folds into the RNase III domain; the sequence is SSDIEVIKKN…LIGALYECLR (123 aa). Glu65 serves as a coordination point for Mg(2+). Residue Asp69 is part of the active site. Mg(2+)-binding residues include Glu137 and Glu140. Glu140 is a catalytic residue. A DRBM domain is found at 179-249; it reads NEKSALQEWS…AKEALKKLTN (71 aa). The segment at 227–249 is disordered; the sequence is GWGSSRKKAQKEAAKEALKKLTN. Residues 236–249 are compositionally biased toward basic and acidic residues; it reads QKEAAKEALKKLTN.

This sequence belongs to the ribonuclease III family. Homodimer. Requires Mg(2+) as cofactor.

Its subcellular location is the cytoplasm. The catalysed reaction is Endonucleolytic cleavage to 5'-phosphomonoester.. Digests double-stranded RNA. Involved in the processing of primary rRNA transcript to yield the immediate precursors to the large and small rRNAs (23S and 16S). Processes some mRNAs, and tRNAs when they are encoded in the rRNA operon. Processes pre-crRNA and tracrRNA of type II CRISPR loci if present in the organism. This is Ribonuclease 3 from Prochlorococcus marinus (strain SARG / CCMP1375 / SS120).